Here is a 60-residue protein sequence, read N- to C-terminus: UPF0391 membrane protein CCNA_00709 (60 aa).

The next 2 membrane-spanning stretches (helical) occupy residues 4-24 (WAII…SGLA) and 33-53 (ILFF…GTVF).

This sequence belongs to the UPF0391 family.

The protein localises to the cell membrane. This chain is UPF0391 membrane protein CCNA_00709, found in Caulobacter vibrioides (strain NA1000 / CB15N) (Caulobacter crescentus).